Here is a 267-residue protein sequence, read N- to C-terminus: Cerberus (267 aa).

The first 17 residues, 1–17 (MHLLLFQLLVLLPLGKT), serve as a signal peptide directing secretion. Disordered stretches follow at residues 19–52 (RHQD…EAEE) and 87–113 (WKKP…QSLI). N26 carries an N-linked (GlcNAc...) asparagine glycan. A compositionally biased stretch (basic and acidic residues) spans 88–101 (KKPEREMHPSRDSD). 4 disulfides stabilise this stretch: C162–C209, C176–C223, C186–C239, and C190–C241. A CTCK domain is found at 162-246 (CRTVPFSQTI…EECQCKVKTE (85 aa)). A glycan (N-linked (GlcNAc...) asparagine) is linked at N222.

It belongs to the DAN family. As to quaternary structure, forms monomers and predominantly dimers. N-glycosylated.

The protein localises to the secreted. Cytokine that may play a role in anterior neural induction and somite formation during embryogenesis in part through a BMP-inhibitory mechanism. Can regulate Nodal signaling during gastrulation as well as the formation and patterning of the primitive streak. The polypeptide is Cerberus (CER1) (Homo sapiens (Human)).